The primary structure comprises 187 residues: Translation machinery-associated protein 22 (187 aa).

Residues 94–165 (VTIKRIERNK…EIEEFILEKY (72 aa)) form the SUI1 domain.

This sequence belongs to the DENR family. As to quaternary structure, interacts with the 40S ribosomal subunit.

Its subcellular location is the cytoplasm. This chain is Translation machinery-associated protein 22 (tma-22), found in Neurospora crassa (strain ATCC 24698 / 74-OR23-1A / CBS 708.71 / DSM 1257 / FGSC 987).